The primary structure comprises 342 residues: Putative anthocyanidin reductase (342 aa).

NADP(+)-binding positions include Arg44, Lys51, 71–72 (EL), 91–93 (VAT), Tyr172, Lys176, 199–202 (PVLV), and Ser214. Lys176 (proton donor) is an active-site residue.

Belongs to the NAD(P)-dependent epimerase/dehydratase family. Dihydroflavonol-4-reductase subfamily. As to expression, highly expressed in leaves and weakly in stems. Not expressed in roots.

The protein operates within secondary metabolite biosynthesis; flavonoid biosynthesis. This Ginkgo biloba (Ginkgo) protein is Putative anthocyanidin reductase.